The sequence spans 301 residues: GTP cyclohydrolase FolE2 (301 aa).

It belongs to the GTP cyclohydrolase IV family.

It carries out the reaction GTP + H2O = 7,8-dihydroneopterin 3'-triphosphate + formate + H(+). The protein operates within cofactor biosynthesis; 7,8-dihydroneopterin triphosphate biosynthesis; 7,8-dihydroneopterin triphosphate from GTP: step 1/1. Functionally, converts GTP to 7,8-dihydroneopterin triphosphate. The chain is GTP cyclohydrolase FolE2 from Exiguobacterium sibiricum (strain DSM 17290 / CCUG 55495 / CIP 109462 / JCM 13490 / 255-15).